A 361-amino-acid chain; its full sequence is tRNA(Ile)-lysidine synthase (361 aa).

Residue 32-37 coordinates ATP; sequence SGGPDS.

The protein belongs to the tRNA(Ile)-lysidine synthase family.

Its subcellular location is the cytoplasm. It catalyses the reaction cytidine(34) in tRNA(Ile2) + L-lysine + ATP = lysidine(34) in tRNA(Ile2) + AMP + diphosphate + H(+). Functionally, ligates lysine onto the cytidine present at position 34 of the AUA codon-specific tRNA(Ile) that contains the anticodon CAU, in an ATP-dependent manner. Cytidine is converted to lysidine, thus changing the amino acid specificity of the tRNA from methionine to isoleucine. This Bradyrhizobium diazoefficiens (strain JCM 10833 / BCRC 13528 / IAM 13628 / NBRC 14792 / USDA 110) protein is tRNA(Ile)-lysidine synthase.